We begin with the raw amino-acid sequence, 645 residues long: 1,4-alpha-glucan branching enzyme GlgB (645 aa).

Asp309 serves as the catalytic Nucleophile. The active-site Proton donor is Glu352. A disordered region spans residues 619–645; it reads VKTRKGSKKQDGSKTKVRSNVTSRGKR. The segment covering 636-645 has biased composition (polar residues); it reads RSNVTSRGKR.

Belongs to the glycosyl hydrolase 13 family. GlgB subfamily. Monomer.

The enzyme catalyses Transfers a segment of a (1-&gt;4)-alpha-D-glucan chain to a primary hydroxy group in a similar glucan chain.. The protein operates within glycan biosynthesis; glycogen biosynthesis. Catalyzes the formation of the alpha-1,6-glucosidic linkages in glycogen by scission of a 1,4-alpha-linked oligosaccharide from growing alpha-1,4-glucan chains and the subsequent attachment of the oligosaccharide to the alpha-1,6 position. The polypeptide is 1,4-alpha-glucan branching enzyme GlgB (Bacillus cereus (strain B4264)).